The primary structure comprises 2039 residues: Methylcytosine dioxygenase TET1 (2039 aa).

Residues Met-1 to Lys-19 are compositionally biased toward basic residues. Disordered stretches follow at residues Met-1–Ala-79, Val-119–Gln-168, and Asp-227–Asp-286. 2 stretches are compositionally biased toward basic and acidic residues: residues Lys-53–Thr-65 and Ile-138–Asn-149. Polar residues-rich tracts occupy residues Asp-150–Gln-168 and Gln-241–Glu-265. Residues Leu-512–Cys-657 are sufficient for binding to genomic CpG islands. Residues Glu-567 to Glu-608 form a CXXC-type zinc finger. Positions 574, 577, 580, 586, 589, 592, 602, and 607 each coordinate Zn(2+). 8 disordered regions span residues Lys-613–Asp-670, Cys-711–Pro-735, Gly-820–Ser-859, Gln-882–Thr-906, Gln-964–Leu-993, Val-1050–Glu-1129, Val-1209–Pro-1240, and Lys-1322–Gln-1341. Positions Glu-653–Asp-670 are enriched in basic and acidic residues. The span at Ile-825–Ala-835 shows a compositional bias: polar residues. Residues His-840 to Asp-852 show a composition bias toward basic and acidic residues. Ser-854 bears the Phosphoserine mark. Residues Ser-884–Ser-894 show a composition bias toward low complexity. The span at Lys-895–Gln-904 shows a compositional bias: basic and acidic residues. The span at Ala-1053–Asn-1064 shows a compositional bias: polar residues. Over residues Lys-1094–Pro-1116 the composition is skewed to basic residues. Composition is skewed to polar residues over residues Ser-1214–Gln-1227 and Gln-1326–Gln-1341. Cys-1371, Cys-1373, Cys-1430, His-1456, and Cys-1458 together coordinate Zn(2+). Arg-1499 is a binding site for 2-oxoglutarate. Residues Cys-1509, Cys-1511, Cys-1527, and Cys-1536 each coordinate Zn(2+). An interaction with DNA region spans residues Ser-1528–Ser-1541. Lys-1537 participates in a covalent cross-link: Glycyl lysine isopeptide (Lys-Gly) (interchain with G-Cter in ubiquitin). Cys-1628 lines the Zn(2+) pocket. Cys-1644 serves as a coordination point for 2-oxoglutarate. A Zn(2+)-binding site is contributed by His-1650. Fe cation contacts are provided by His-1652 and Asp-1654. Asn-1657 contacts substrate. His-1685 provides a ligand contact to 2-oxoglutarate. Positions Gly-1734 to His-1743 are enriched in basic residues. Disordered stretches follow at residues Gly-1734–Thr-1760 and Ala-1830–Leu-1901. Low complexity predominate over residues Ser-1748–Thr-1760. Residues Thr-1850–Ala-1875 are compositionally biased toward polar residues. Over residues Glu-1880–Asp-1895 the composition is skewed to basic and acidic residues. Residue His-1939 coordinates Fe cation. A 2-oxoglutarate-binding site is contributed by Arg-1954 to Ser-1956. Tyr-1960 to His-1962 is a substrate binding site. Position 1970 (His-1970) interacts with Zn(2+).

Belongs to the TET family. As to quaternary structure, interacts with SIN3A; recruits the transcriptional co-repressor SIN3A to gene promoters. Interacts with HCFC1. Interacts (via C-terminus) with OGT. Found in a complex composed of at least SINHCAF, SIN3A, HDAC1, SAP30, RBBP4, OGT and TET1. Interacts with QSER1. Interacts with NONO (via DNA-binding domain); this interaction recruits TET1 to genomic loci. Interacts with FOXA2; this interaction may recruit TET1 to specific enhancers to preserve their unmethylated status and hence allowing gene expression. Interacts with RNF2. Directly interacts (via C-terminus) with the DCAF1 component of the CRL4(VprBP) E3 ubiquitin-protein ligase complex. Interacts with UHRF1; this interaction induces the recruitment of TET1 to replicating heterochromatin. Interacts with DCAF1. Fe(2+) is required as a cofactor. The cofactor is Zn(2+). In terms of processing, glycosylated. Interaction with OGT leads to GlcNAcylation. Monoubiquitinated by the DCX (DDB1-CUL4-X-box) E3 ubiquitin-protein ligase complex called CRL4(VprBP) or CUL4A-RBX1-DDB1-DCAF1/VPRBP complex. Post-translationally, monoubiquitinated by the DCX (DDB1-CUL4-X-box) E3 ubiquitin-protein ligase complex called CRL4(VprBP) or CUL4A-RBX1-DDB1-DCAF1/VPRBP complex; this modification promotes binding to DNA. As to expression, expressed in germinal vesicle (GV) stage and MII-stage oocytes and in early embryos. Also detected somatic tissues, including brain, liver and kidney, but at very low levels. In terms of tissue distribution, predominantly expressed in early embryos. Also expressed in embryonic stem cells and in primordial germ cells. Expressed in adult tissues, including brain cortex, cerebellum, heart, kidney, liver, muscle and spleen, although at much lower levels than isoform 2. In the brain, expressed at higher levels in glial cells than in neurons. Expressed in placenta. Expressed in the pituitary, most probably in thyrotropes. Preferentially expressed in differentiated cells, including in cerebral cortex, cerebellum and thymus. Also expressed in heart, kidney, liver, muscle and spleen at much higher levels than isoform 1. In the brain, expressed at higher levels in neurons than in glial cells. Expressed in the olfactory bulb and in the mammary gland.

It localises to the nucleus. The protein localises to the chromosome. The enzyme catalyses a 5-methyl-2'-deoxycytidine in DNA + 2-oxoglutarate + O2 = a 5-hydroxymethyl-2'-deoxycytidine in DNA + succinate + CO2. It carries out the reaction a 5-hydroxymethyl-2'-deoxycytidine in DNA + 2-oxoglutarate + O2 = a 5-formyl-2'-deoxycytidine in DNA + succinate + CO2 + H2O. It catalyses the reaction a 5-formyl-2'-deoxycytidine in DNA + 2-oxoglutarate + O2 = a 5-carboxyl-2'-deoxycytidine in DNA + succinate + CO2 + H(+). Its function is as follows. Dioxygenase that plays a key role in active DNA demethylation, by catalyzing the sequential oxidation of the modified genomic base 5-methylcytosine (5mC) into 5-hydroxymethylcytosine (5hmC), 5-formylcytosine (5fC), and 5-carboxylcytosine (5caC). In addition to its role in DNA demethylation, plays a more general role in chromatin regulation by recruiting histone modifying protein complexes to alter histone marks and chromatin accessibility, leading to both activation and repression of gene expression. Plays therefore a role in many biological processes, including stem cell maintenance, T- and B-cell development, inflammation regulation, iron homeostasis, neural activity or DNA repair. Involved in the balance between pluripotency and lineage commitment of cells it plays a role in embryonic stem cells maintenance and inner cell mass cell specification. Together with QSER1, plays an essential role in the protection and maintenance of transcriptional and developmental programs to inhibit the binding of DNMT3A/3B and therefore de novo methylation. May play a role in the pancreatic beta-cell specification during development. In this context, may function as an upstream epigenetic regulator of PAX4 presumably through direct recruitment by FOXA2 to a PAX4 enhancer to preserve its unmethylated status, thereby potentiating PAX4 expression to adopt beta-cell fate during endocrine lineage commitment. Under DNA hypomethylation conditions, such as in female meiotic germ cells, may induce epigenetic reprogramming of pericentromeric heterochromatin (PCH), the constitutive heterochromatin of pericentromeric regions. PCH forms chromocenters in the interphase nucleus and chromocenters cluster at the prophase of meiosis. In this context, may also be essential for chromocenter clustering in a catalytic activity-independent manner, possibly through the recruitment polycomb repressive complex 1 (PRC1) to the chromocenters. During embryonic development, may be required for normal meiotic progression in oocytes and meiotic gene activation. Binds preferentially to DNA containing cytidine-phosphate-guanosine (CpG) dinucleotides over CpH (H=A, T, and C), hemimethylated-CpG and hemimethylated-hydroxymethyl-CpG. Dioxygenase that plays a key role in active DNA demethylation. Binds to promoters, particularly to those with high CG content. In hippocampal neurons, isoform 1 regulates the expression of a unique subset of genes compared to isoform 2, although some overlap between both isoforms, hence differentially regulates excitatory synaptic transmission. In hippocampal neuron cell cultures, isoform 1 controls both miniature excitatory postsynaptic current amplitude and frequency. Isoform 1 may regulate genes involved in hippocampal-dependent memory, leading to positive regulation of memory, contrary to isoform 2 that may decrease memory. In terms of biological role, dioxygenase that plays a key role in active DNA demethylation. As isoform 1, binds to promoters, particularly to those with high CG content, however displays reduced global chromatin affinity compared with isoform 1, leading to decreased global DNA demethylation compared with isoform 1. Contrary to isoform 1, isoform 2 localizes during S phase to sites of ongoing DNA replication in heterochromatin, causing a significant de novo 5hmC formation, globally, and more so in heterochromatin, including LINE 1 interspersed DNA repeats leading to their activation. In hippocampal neurons, isoform 2 regulates the expression of a unique subset of genes compared with isoform 1, although some overlap between both isoforms, hence differentially regulating excitatory synaptic transmission. In hippocampal neuron cell cultures, isoform 2 controls miniature excitatory postsynaptic current frequency, but not amplitude. Isoform 2 may regulate genes involved in hippocampal-dependent memory, leading to negative regulation of memory, contrary to isoform 1 that may improve memory. In immature and partially differentiated gonadotrope cells, represses luteinizing hormone gene LHB expression directly and does not catalyze 5hmC at the gene promoter. This chain is Methylcytosine dioxygenase TET1 (Tet1), found in Mus musculus (Mouse).